The chain runs to 302 residues: Glutaminase (302 aa).

Serine 61, asparagine 111, glutamate 155, asparagine 162, tyrosine 186, tyrosine 238, and valine 256 together coordinate substrate.

Belongs to the glutaminase family. In terms of assembly, homotetramer.

The catalysed reaction is L-glutamine + H2O = L-glutamate + NH4(+). The chain is Glutaminase from Ectopseudomonas mendocina (strain ymp) (Pseudomonas mendocina).